We begin with the raw amino-acid sequence, 709 residues long: Coiled-coil domain-containing protein 13 (709 aa).

Coiled coils occupy residues 70 to 97 (IFEK…NGRL), 139 to 178 (ELSK…ASAK), and 206 to 288 (EVKA…QRQN). Ser-258 is modified (phosphoserine). A disordered region spans residues 281–312 (KQLGQRQNKPAGSSSSEVPLSSDSRKMTAQEK). A compositionally biased stretch (low complexity) spans 293 to 302 (SSSSEVPLSS). Residues 323–457 (DKQESWEKLA…ELEIGQLSVQ (135 aa)) adopt a coiled-coil conformation. 3 disordered regions span residues 462–499 (KGGG…LGSS), 512–542 (SALT…QAQA), and 600–641 (KMRL…SSTQ). 2 positions are modified to phosphoserine: Ser-469 and Ser-532. Residues 539-604 (QAQAAEMKAL…EQHLEKMRLE (66 aa)) adopt a coiled-coil conformation.

In terms of assembly, interacts with PCM1, CEP290 and PCNT.

The protein localises to the cytoplasm. The protein resides in the cytoskeleton. It is found in the microtubule organizing center. It localises to the centrosome. Its subcellular location is the centriolar satellite. The protein localises to the cilium basal body. Functionally, required for primary cilia formation and promotes the localization of the ciliopathy protein BBS4 to both centriolar satellites and cilia. The protein is Coiled-coil domain-containing protein 13 of Mus musculus (Mouse).